Reading from the N-terminus, the 299-residue chain is Urease accessory protein UreD (299 aa).

It belongs to the UreD family. UreD, UreF and UreG form a complex that acts as a GTP-hydrolysis-dependent molecular chaperone, activating the urease apoprotein by helping to assemble the nickel containing metallocenter of UreC. The UreE protein probably delivers the nickel.

It localises to the cytoplasm. Functionally, required for maturation of urease via the functional incorporation of the urease nickel metallocenter. The protein is Urease accessory protein UreD of Natronomonas pharaonis (strain ATCC 35678 / DSM 2160 / CIP 103997 / JCM 8858 / NBRC 14720 / NCIMB 2260 / Gabara) (Halobacterium pharaonis).